The primary structure comprises 292 residues: Homoserine kinase (292 aa).

84–94 is an ATP binding site; that stretch reads PLSRGLGSSSA.

The protein belongs to the GHMP kinase family. Homoserine kinase subfamily.

The protein localises to the cytoplasm. It carries out the reaction L-homoserine + ATP = O-phospho-L-homoserine + ADP + H(+). It functions in the pathway amino-acid biosynthesis; L-threonine biosynthesis; L-threonine from L-aspartate: step 4/5. Catalyzes the ATP-dependent phosphorylation of L-homoserine to L-homoserine phosphate. The sequence is that of Homoserine kinase from Campylobacter jejuni subsp. doylei (strain ATCC BAA-1458 / RM4099 / 269.97).